The following is a 963-amino-acid chain: Phosphofurin acidic cluster sorting protein 1 (963 aa).

Residues 1–22 (MAERGGAGGGPGGAGGGSGQRG) are compositionally biased toward gly residues. Disordered stretches follow at residues 1–72 (MAER…SSST) and 78–97 (VAVA…RTPA). Alanine 2 is subject to N-acetylalanine. Serine 28 is subject to Phosphoserine. Threonine 46 is subject to Phosphothreonine. The segment covering 53 to 72 (ATSSSSSTSAAAASSSSSST) has biased composition (low complexity). The involved in binding to AP-1 stretch occupies residues 168–175 (ETELQLTF). Tyrosine 251 is modified (phosphotyrosine). Positions 262 to 273 (GIKSKLSDRSPD) are enriched in basic and acidic residues. Disordered stretches follow at residues 262–299 (GIKS…LHGQ) and 377–428 (NPSD…GKDT). Positions 276–293 (NYSEEEEESFSSEQEGSD) are enriched in acidic residues. The stretch at 353–377 (HVSREQIREVEEDLDELYDSLEMYN) forms a coiled coil. Serine 379 and serine 381 each carry phosphoserine. Residues 406-428 (MSQSSSQTEIGSLNSKGSLGKDT) show a composition bias toward polar residues. Phosphoserine occurs at positions 430 and 495. 2 disordered regions span residues 476–542 (PEKV…HSTQ) and 760–804 (SPST…SMSS). Positions 483-496 (MKSSKTDLQGSASP) are enriched in polar residues. Threonine 504 bears the Phosphothreonine mark. Phosphoserine occurs at positions 519, 528, 529, 531, and 534. Residues 770 to 804 (SPVVSLTVPSTSPPSSSGLSRDATATPPSSPSMSS) are compositionally biased toward low complexity.

It belongs to the PACS family. As to quaternary structure, associates with AP-1 and AP-3 but not with AP-2 complexes. Interacts with FURIN. Forms a ternary complex with FURIN and AP-1. Interacts with NPHP1; the interaction is dependent of NPHP1 phosphorylation by CK2. Interacts with PKD2 (via acidic region). Interacts with SORL1. Interacts with WDR37. In terms of assembly, (Microbial infection) Interacts with HIV-1 Nef. (Microbial infection) Interacts with Epstein-barr virus protein BBLF1.

It is found in the golgi apparatus. The protein resides in the trans-Golgi network. Functionally, coat protein that is involved in the localization of trans-Golgi network (TGN) membrane proteins that contain acidic cluster sorting motifs. Controls the endosome-to-Golgi trafficking of furin and mannose-6-phosphate receptor by connecting the acidic-cluster-containing cytoplasmic domain of these molecules with the adapter-protein complex-1 (AP-1) of endosomal clathrin-coated membrane pits. Involved in HIV-1 nef-mediated removal of MHC-I from the cell surface to the TGN. Required for normal ER Ca2+ handling in lymphocytes. Together with WDR37, it plays an essential role in lymphocyte development, quiescence and survival. Required for stabilizing peripheral lymphocyte populations. This Homo sapiens (Human) protein is Phosphofurin acidic cluster sorting protein 1 (PACS1).